The following is an 816-amino-acid chain: Probable disease resistance protein At4g33300 (816 aa).

An RPW8 domain is found at 1-149; the sequence is MAITDFFAGE…SLDRVIQQVG (149 aa). Residues 95–111 are a coiled coil; the sequence is TLARKMEKLEKTISNFL. In terms of domain architecture, NB-ARC spans 191–443; that stretch reads VKKMMFESQG…LDVLINIWIE (253 aa). 207-214 contacts ATP; it reads GMGGVGKT. Residues 399 to 415 are a coiled coil; the sequence is SRLLRQMEASLDNLDQT. LRR repeat units lie at residues 681-704, 705-727, 729-751, and 753-774; these read SLSC…SKLQ, ALEI…ICEL, GLKY…IGKL, and KLEK…AVSL.

It belongs to the disease resistance NB-LRR family.

Its function is as follows. Probable disease resistance protein. This chain is Probable disease resistance protein At4g33300, found in Arabidopsis thaliana (Mouse-ear cress).